Here is a 276-residue protein sequence, read N- to C-terminus: Probable endonuclease 4 (276 aa).

Zn(2+) is bound by residues His-70, His-108, Glu-143, Asp-176, His-179, His-210, Asp-223, His-225, and Glu-255.

This sequence belongs to the AP endonuclease 2 family. It depends on Zn(2+) as a cofactor.

The catalysed reaction is Endonucleolytic cleavage to 5'-phosphooligonucleotide end-products.. Functionally, endonuclease IV plays a role in DNA repair. It cleaves phosphodiester bonds at apurinic or apyrimidinic (AP) sites, generating a 3'-hydroxyl group and a 5'-terminal sugar phosphate. This Mesomycoplasma hyopneumoniae (strain J / ATCC 25934 / NCTC 10110) (Mycoplasma hyopneumoniae) protein is Probable endonuclease 4.